The primary structure comprises 77 residues: Dermatoxin-A1 (77 aa).

A signal peptide spans 1-22 (MAFLKKSLFLVLFLGLVPLFLC). Residues 23–42 (ENEKREGENEKEENDDQSEE) constitute a propeptide that is removed on maturation. Q76 carries the post-translational modification Glutamine amide.

This sequence belongs to the frog skin active peptide (FSAP) family. Dermatoxin subfamily. Expressed by the skin glands.

It localises to the secreted. Its function is as follows. Possesses a potent antimicrobial activity against Gram-positive and Gram-negative bacteria. Probably acts by disturbing membrane functions with its amphipathic structure. The chain is Dermatoxin-A1 from Agalychnis annae (Blue-sided leaf frog).